A 111-amino-acid polypeptide reads, in one-letter code: N-alpha-acetyltransferase 38-B, NatC auxiliary subunit (111 aa).

A Sm domain is found at 28–106; the sequence is TARHKLESLL…IVSIQVELET (79 aa).

This sequence belongs to the snRNP Sm proteins family. In terms of assembly, component of the N-terminal acetyltransferase C (NatC) complex, which is composed of naa35, naa38 and naa30.

The protein resides in the cytoplasm. Auxillary component of the N-terminal acetyltransferase C (NatC) complex which catalyzes acetylation of N-terminal methionine residues. The chain is N-alpha-acetyltransferase 38-B, NatC auxiliary subunit (naa38-b) from Xenopus laevis (African clawed frog).